The chain runs to 430 residues: Drebrin-like protein (430 aa).

The 130-residue stretch at 4–133 (NLSRNGPALQ…EPECIMEKVA (130 aa)) folds into the ADF-H domain. Thr26 carries the post-translational modification Phosphothreonine. Phosphoserine is present on residues Gly137 and Ser160. Lys176 carries the post-translational modification N6-acetyllysine. Residues 176-231 (KDSFWAKAEKEEENRRLEEKRRAEEAQRQLEQERRERELREAARREQRYQEQGGEA) are a coiled coil. Phosphoserine is present on residues Ala183 and Ser232. The tract at residues 219–283 (RREQRYQEQG…SSPQPGKLRS (65 aa)) is disordered. Polar residues predominate over residues 233-244 (PQRTWEQQQEVV). A compositionally biased stretch (basic and acidic residues) spans 245–267 (SRNRNEQESAVHPREIFKQKERA). Residues 268 to 277 (MSTTSISSPQ) are compositionally biased toward polar residues. Phosphoserine is present on residues Ser269, Ser272, Ser275, and Ser283. Lys288 is subject to N6-acetyllysine. Thr291 carries the post-translational modification Phosphothreonine. Tyr334 and Tyr344 each carry phosphotyrosine. The 60-residue stretch at 371-430 (GQGLCARALYDYQAADDTEISFDPENLITGIEVIDEGWWRGYGPDGHFGMFPANYVELIE) folds into the SH3 domain.

It belongs to the ABP1 family. As to quaternary structure, interacts with SHANK2, SHANK3 and SYN1. Interacts with FGD1 and DNM1. Interacts with ANKRD54. Interacts with COBL. Interacts with WASL and WIPF1. Interacts with MAP4K1 and PRAM1. Degraded by caspases during apoptosis.

The protein resides in the cytoplasm. It localises to the cytoskeleton. It is found in the cell projection. Its subcellular location is the lamellipodium. The protein localises to the ruffle. The protein resides in the cell cortex. It localises to the cytosol. It is found in the synapse. Its subcellular location is the perikaryon. The protein localises to the neuron projection. The protein resides in the cell membrane. It localises to the cytoplasmic vesicle. It is found in the clathrin-coated vesicle membrane. Its subcellular location is the golgi apparatus membrane. The protein localises to the podosome. The protein resides in the early endosome. It localises to the dendrite. It is found in the postsynaptic density. In terms of biological role, adapter protein that binds F-actin and DNM1, and thereby plays a role in receptor-mediated endocytosis. Plays a role in the reorganization of the actin cytoskeleton, formation of cell projections, such as neurites, in neuron morphogenesis and synapse formation via its interaction with WASL and COBL. Does not bind G-actin and promote actin polymerization by itself. Required for the formation of organized podosome rosettes. May act as a common effector of antigen receptor-signaling pathways in leukocytes. Acts as a key component of the immunological synapse that regulates T-cell activation by bridging TCRs and the actin cytoskeleton to gene activation and endocytic processes. This is Drebrin-like protein (DBNL) from Homo sapiens (Human).